Reading from the N-terminus, the 297-residue chain is Large ribosomal subunit protein uL15m (297 aa).

The transit peptide at 1–22 (MAGPVRGAAGPWALDLLRALPR) directs the protein to the mitochondrion. The disordered stretch occupies residues 27–68 (NLRPNPGSRKPERRRRGQRRGRKCGRGHKGERQRGTRPRLGF). Residues 37 to 53 (PERRRRGQRRGRKCGRG) show a composition bias toward basic residues.

This sequence belongs to the universal ribosomal protein uL15 family. Component of the mitochondrial ribosome large subunit (39S) which comprises a 16S rRNA and about 50 distinct proteins.

It localises to the mitochondrion. This Bos taurus (Bovine) protein is Large ribosomal subunit protein uL15m (MRPL15).